The sequence spans 354 residues: Uroporphyrinogen decarboxylase (354 aa).

Residues 27 to 31 (RQAGR), Asp77, Tyr154, Thr209, and His327 contribute to the substrate site.

The protein belongs to the uroporphyrinogen decarboxylase family. In terms of assembly, homodimer.

The protein resides in the cytoplasm. It catalyses the reaction uroporphyrinogen III + 4 H(+) = coproporphyrinogen III + 4 CO2. It functions in the pathway porphyrin-containing compound metabolism; protoporphyrin-IX biosynthesis; coproporphyrinogen-III from 5-aminolevulinate: step 4/4. Its function is as follows. Catalyzes the decarboxylation of four acetate groups of uroporphyrinogen-III to yield coproporphyrinogen-III. In Actinobacillus pleuropneumoniae serotype 5b (strain L20), this protein is Uroporphyrinogen decarboxylase.